A 968-amino-acid polypeptide reads, in one-letter code: MTETPTGTQSSRETAADDTPRHRYTAGLAGEIERAWQQRWTQDGTFDVANPVGSLAPADGSAVPADKMFVQDMFPYPSGEGLHVGHPLGYIATDVYARYYRMTGRNVLHALGFDAFGLPAEQYAIQTGTHPRTRTEANIVNFRRQLGRLGLGHDSRRSFSTTDVDFYKWTQWIFLQIYNAWFDTAQNKARPVAELIAEFEAGTREVGDGRRWADLDAGERADVVDSRRLVYLADSVVNWCPGLGTVLANEEVTSDGRSERGNFPVFRKRLRQWMMRITAYSDRLLEDLDVLDWPDKVKTMQRNWIGRSTGASVEFGTDAGDIEVFTTRPDTLFGATYMVLAPEHDLVDRLVADQWPADVDARWTFGAATPREAVAAYRASIAAKSDLERQENKAKTGVFIGAYATNPANAKQVPVFIADYVLAGYGTGAIMAVPGGDQRDWDFATEFGLPIIEVVRPVADRPGEDTGAGGDVSQAAYTGDGVMVNSGFLDGMDVSAAKEAMTERLSADGRGRERVEYKLRDWLFARQRYWGEPFPIVYDADDRAHGLPEELLPVELPDVPDYSPVLFDPDDADSEPSPPLAKATEWVNVELDLGDGRKRYTRDTNVMPQWAGSSWYELRYADPHNTEALCAKENEAYWMGPRPAEHGPDDPGGVDLYVGGVEHAVLHLLYSRFWHKVLYDLGHVSSREPYRRLVNQGYIQAFAYTDARGSYVPAAEVVERDGKFFWPGPDGEIEVNQEFGKIGKSLKNSVSPDEICDDYGADTLRVYEMSMGPLEASRPWATKDVVGAHRFLQRVWRLVVSEETGETVVTDDALDEDTLRLLHRTIAGTADDYAALRNNTAAAKLIEYTNHLTKQSVTARAALEPLVLMVAPLAPHLAEELWRRLGHDASLAHGPFPVADERYLVEDTVEYPVQVNGKVRGRVTVAADAPADAVEAAALADDKVVAFLDGKTPKKVIVVAGRLVNVVL.

Residues 1 to 13 (MTETPTGTQSSRE) are compositionally biased toward polar residues. Residues 1–22 (MTETPTGTQSSRETAADDTPRH) form a disordered region. Positions 75–86 (PYPSGEGLHVGH) match the 'HIGH' region motif. The short motif at 741-745 (KIGKS) is the 'KMSKS' region element. K744 provides a ligand contact to ATP.

This sequence belongs to the class-I aminoacyl-tRNA synthetase family.

It is found in the cytoplasm. It carries out the reaction tRNA(Leu) + L-leucine + ATP = L-leucyl-tRNA(Leu) + AMP + diphosphate. This is Leucine--tRNA ligase from Mycolicibacterium vanbaalenii (strain DSM 7251 / JCM 13017 / BCRC 16820 / KCTC 9966 / NRRL B-24157 / PYR-1) (Mycobacterium vanbaalenii).